Reading from the N-terminus, the 454-residue chain is B-cell lymphoma 3 protein (454 aa).

The disordered stretch occupies residues 1–50 (MPRCPAGAMDEGPVDLRTRPKAAGLPGAALPLRKRPLRAPSPEPAAPRGA). Over residues 21–31 (KAAGLPGAALP) the composition is skewed to low complexity. Ser-41 is subject to Phosphoserine. ANK repeat units lie at residues 134-163 (DGDT…QGGR), 171-200 (LRQT…SPMA), 204-235 (HGQT…TLDL), 241-270 (DGLT…DIDA), 275-304 (SGRS…NVNA), 308-337 (SGSS…DSSL), and 338-367 (KNCH…RPAS). Residues 360-454 (GKATRPASTS…VPPSPAPGGS (95 aa)) form a disordered region. Over residues 365–381 (PASTSQPDPSPDRSANT) the composition is skewed to polar residues. Residue Ser-374 is modified to Phosphoserine. Residues 382-404 (SPESSSRLSSNGLLSASPSSSPS) are compositionally biased toward low complexity. Residues Ser-402 and Ser-406 each carry the phosphoserine; by GSK3 modification. The segment covering 405-418 (QSPPRDPPGFPMAP) has biased composition (pro residues). The segment covering 432 to 442 (LPFAGVLRGPG) has biased composition (low complexity). Over residues 443–454 (RPVPPSPAPGGS) the composition is skewed to pro residues.

As to quaternary structure, component of a complex consisting of the NF-kappa-B p52-p52 homodimer and BCL3. Component of a complex consisting of the NF-kappa-B p50-p50 homodimer and BCL3. Interacts with N4BP2, COPS5 and PIR. Interacts with CYLD. Polyubiquitinated. Ubiquitination via 'Lys-63'-linked ubiquitin chains is required for nuclear accumulation. Deubiquitinated by CYLD, which acts on 'Lys-63'-linked ubiquitin chains. Deubiquitination by CYLD prevents nuclear accumulation. In terms of processing, activated by phosphorylation.

It is found in the nucleus. The protein resides in the cytoplasm. It localises to the perinuclear region. Functionally, contributes to the regulation of transcriptional activation of NF-kappa-B target genes. In the cytoplasm, inhibits the nuclear translocation of the NF-kappa-B p50 subunit. In the nucleus, acts as transcriptional activator that promotes transcription of NF-kappa-B target genes. Contributes to the regulation of cell proliferation. This chain is B-cell lymphoma 3 protein (BCL3), found in Homo sapiens (Human).